The sequence spans 518 residues: Cytochrome P450 3A27 (518 aa).

C447 provides a ligand contact to heme.

Belongs to the cytochrome P450 family. Heme serves as cofactor.

The protein localises to the endoplasmic reticulum membrane. The protein resides in the microsome membrane. The enzyme catalyses an organic molecule + reduced [NADPH--hemoprotein reductase] + O2 = an alcohol + oxidized [NADPH--hemoprotein reductase] + H2O + H(+). Functionally, cytochromes P450 are a group of heme-thiolate monooxygenases. In liver microsomes, this enzyme is involved in an NADPH-dependent electron transport pathway. It oxidizes a variety of structurally unrelated compounds, including steroids, fatty acids, and xenobiotics. The polypeptide is Cytochrome P450 3A27 (cyp3a27) (Oncorhynchus mykiss (Rainbow trout)).